The sequence spans 261 residues: Segregation and condensation protein A (261 aa).

Belongs to the ScpA family. As to quaternary structure, component of a cohesin-like complex composed of ScpA, ScpB and the Smc homodimer, in which ScpA and ScpB bind to the head domain of Smc. The presence of the three proteins is required for the association of the complex with DNA.

It is found in the cytoplasm. Participates in chromosomal partition during cell division. May act via the formation of a condensin-like complex containing Smc and ScpB that pull DNA away from mid-cell into both cell halves. In Ligilactobacillus salivarius (strain UCC118) (Lactobacillus salivarius), this protein is Segregation and condensation protein A.